The following is a 591-amino-acid chain: Fidgetin-like protein 1 (591 aa).

2 disordered regions span residues 1–117 and 223–249; these read MYSP…KSSL and GQEPQKSKFQIPLDRQSSSQSNHSQPI. Positions 17 to 26 are enriched in basic and acidic residues; sequence KRPETEENRG. Acidic residues predominate over residues 76 to 93; the sequence is DDDPESIVIDEDDEEDEP. The span at 237-249 shows a compositional bias: polar residues; it reads RQSSSQSNHSQPI. ATP-binding positions include A319 and 359 to 364; that span reads GTGKTM.

It belongs to the AAA ATPase family. Hexamer. Mg(2+) serves as cofactor.

Its subcellular location is the nucleus. The catalysed reaction is ATP + H2O = ADP + phosphate + H(+). Functionally, has a role in spindle assembly which acts in the progression through mitosis during embryogenesis. Required for fertility. The sequence is that of Fidgetin-like protein 1 (figl-1) from Caenorhabditis briggsae.